A 76-amino-acid chain; its full sequence is Exodeoxyribonuclease 7 small subunit (76 aa).

This sequence belongs to the XseB family. In terms of assembly, heterooligomer composed of large and small subunits.

The protein resides in the cytoplasm. It carries out the reaction Exonucleolytic cleavage in either 5'- to 3'- or 3'- to 5'-direction to yield nucleoside 5'-phosphates.. Functionally, bidirectionally degrades single-stranded DNA into large acid-insoluble oligonucleotides, which are then degraded further into small acid-soluble oligonucleotides. The protein is Exodeoxyribonuclease 7 small subunit of Enterococcus faecalis (strain ATCC 700802 / V583).